The following is a 560-amino-acid chain: Glutamine--tRNA ligase (560 aa).

Positions 36–46 (PEPNGFAHIGH) match the 'HIGH' region motif. ATP-binding positions include 37 to 39 (EPN) and 43 to 49 (HIGHAKA). 2 residues coordinate L-glutamine: Asp69 and Tyr214. 263–264 (RL) is an ATP binding site. Residues 270 to 274 (LTSKR) carry the 'KMSKS' region motif.

The protein belongs to the class-I aminoacyl-tRNA synthetase family. In terms of assembly, monomer.

It localises to the cytoplasm. It carries out the reaction tRNA(Gln) + L-glutamine + ATP = L-glutaminyl-tRNA(Gln) + AMP + diphosphate. In Chromobacterium violaceum (strain ATCC 12472 / DSM 30191 / JCM 1249 / CCUG 213 / NBRC 12614 / NCIMB 9131 / NCTC 9757 / MK), this protein is Glutamine--tRNA ligase.